Consider the following 596-residue polypeptide: Aspartate--tRNA(Asp/Asn) ligase (596 aa).

L-aspartate is bound at residue glutamate 175. The aspartate stretch occupies residues glutamine 199–lysine 202. Residues arginine 221 and histidine 454 each contribute to the L-aspartate site. Residue arginine 221–glutamate 223 participates in ATP binding. Glutamate 488 is a binding site for ATP. Residue arginine 495 participates in L-aspartate binding. Glycine 540–arginine 543 is a binding site for ATP.

The protein belongs to the class-II aminoacyl-tRNA synthetase family. Type 1 subfamily. In terms of assembly, homodimer.

Its subcellular location is the cytoplasm. It carries out the reaction tRNA(Asx) + L-aspartate + ATP = L-aspartyl-tRNA(Asx) + AMP + diphosphate. Its function is as follows. Aspartyl-tRNA synthetase with relaxed tRNA specificity since it is able to aspartylate not only its cognate tRNA(Asp) but also tRNA(Asn). Reaction proceeds in two steps: L-aspartate is first activated by ATP to form Asp-AMP and then transferred to the acceptor end of tRNA(Asp/Asn). The chain is Aspartate--tRNA(Asp/Asn) ligase from Rhizobium rhizogenes (strain K84 / ATCC BAA-868) (Agrobacterium radiobacter).